The primary structure comprises 974 residues: Ovochymase-2 (974 aa).

The first 21 residues, 1 to 21, serve as a signal peptide directing secretion; it reads MAETSIFPIMMLTVMIGVGRG. A propeptide spans 22 to 49 (activation peptide); the sequence is VTDSPGRVSRCGERPAANTSVSYGLLSR. Residue Asn-39 is glycosylated (N-linked (GlcNAc...) asparagine). In terms of domain architecture, Peptidase S1 1 spans 50 to 299; that stretch reads IVGGTSAVKG…LLNWLSENLN (250 aa). Cys-75 and Cys-91 are disulfide-bonded. The active-site Charge relay system is the His-90. Ca(2+) is bound by residues Val-112 and Glu-117. Asp-140 serves as the catalytic Charge relay system. Intrachain disulfides connect Cys-174/Cys-244, Cys-205/Cys-223, Cys-234/Cys-263, Cys-312/Cys-342, Cys-369/Cys-388, Cys-435/Cys-462, Cys-489/Cys-510, Cys-615/Cys-631, Cys-713/Cys-776, Cys-741/Cys-754, and Cys-766/Cys-795. Ser-238 serves as the catalytic Charge relay system. CUB domains are found at residues 312-425 and 435-547; these read CSTN…YEAV and CGSV…ISFV. The Peptidase S1 2 domain occupies 590 to 819; that stretch reads LIKAEEAMPN…FIPWIMETIL (230 aa). Residues 590–974 constitute a propeptide, activation peptide; that stretch reads LIKAEEAMPN…WLSYSFHNQN (385 aa). An N-linked (GlcNAc...) asparagine glycan is attached at Asn-763. Residues 830-858 form a disordered region; that stretch reads EPHHPLFPPDKPSQQKALLPDSPPSSSSQ. Asn-926 carries an N-linked (GlcNAc...) asparagine glycan.

Belongs to the peptidase S1 family. Post-translationally, the catalytically inactive 107 kDa form is processed both N- and C-terminally to give rise to the 66 kDa catalytically active form and inactive forms of 82 kDa and 59 kDa. Expressed specifically in the cells lining the bottom of epithelial folds in the oviductal pars recta.

The protein localises to the secreted. It catalyses the reaction Preferential cleavage at 371-Gly-Ser-Arg-|-Trp-374 of glycoprotein gp43 in Xenopus laevis coelemic egg envelope to yield gp41.. Its function is as follows. Mediates gamete interaction by affecting the vitelline coat. In Bufo japonicus (Japanese common toad), this protein is Ovochymase-2 (OVCH2).